Here is a 388-residue protein sequence, read N- to C-terminus: MLPSPSVHMASPPPSLNMASHPPSPATASRKRFQDSSKKIMNPSFADLPSSLIEEIMLLLVLKDNIRASAACKSWYEAGVSVRVVDKHPWLMCFPKRGNLFEFRDPLHWKLHTLDLPELAESTVCYSRFGWLLMRKASSNDVFFFNPFSRDIISLPMCELDFQQIAFSCPPTSDDCVLLAIKFVPGEVNRVTVSTCNPGATKWITNDFPTFLRLFYMQSNLVYRRDRFYCFNAEGTLYSFEPSYREWSYICADKLRCPYVHENQYMWCGKAVFLVEKKGELFVMFTCSNEKPMVYKLFSMKWKELSRTTLDGMTFFVSFYNSELRNNLPWMRNNVYFSRFGYNRKHCVSFSFDESRYNTPKEWEQWVELCPPQSLWIDTPKNVLDYFL.

The disordered stretch occupies residues 1 to 30 (MLPSPSVHMASPPPSLNMASHPPSPATASR). The 47-residue stretch at 42–88 (NPSFADLPSSLIEEIMLLLVLKDNIRASAACKSWYEAGVSVRVVDKH) folds into the F-box domain.

The polypeptide is F-box protein At4g00893 (Arabidopsis thaliana (Mouse-ear cress)).